The sequence spans 436 residues: MALPTIAIVGRPNVGKSTLFNRIAGERISIVEDVEGVTRDRIYATADWLNRKFSIIDTGGIDDVDAPFMEQIKHQAEIAMDEADVIVFVVSGKEGITDADEYVARMLYKTHKPIILAVNKVDNPEMRNEIFDFYALGLGDPFPVSSVHGIGTGDVLDAIVENLPNEEVAENPDMIKFSLIGRPNVGKSSLINAILGEERVIASPVAGTTRDAIDTVFTDSEGQEFTMIDTAGMRKSGKVYENTEKYSVMRAMRAIDRSDVVLMVLNAEEGIREYDKRIAGFAHEAGKGIVIVVNKWDTLEKDNHTMKDWEADIRDQFQYLSYAPIIFVSALTKQRLHKLPDMIKQISQSQNTRIPSAVLNDVIMDAIAINPTPTDKGKRLKIFYATQVATKPPTFVIFVNEEELMHFSYLRFLENQIRKAFVFEGTPIHLIARKRK.

2 consecutive EngA-type G domains span residues 4–167 (PTIA…PNEE) and 175–351 (IKFS…QSQN). GTP-binding positions include 10 to 17 (GRPNVGKS), 57 to 61 (DTGGI), 119 to 122 (NKVD), 181 to 188 (GRPNVGKS), 229 to 233 (DTAGM), and 294 to 297 (NKWD). The KH-like domain occupies 352–436 (TRIPSAVLND…PIHLIARKRK (85 aa)).

Belongs to the TRAFAC class TrmE-Era-EngA-EngB-Septin-like GTPase superfamily. EngA (Der) GTPase family. In terms of assembly, associates with the 50S ribosomal subunit.

Its function is as follows. GTPase that plays an essential role in the late steps of ribosome biogenesis. This is GTPase Der from Streptococcus gordonii (strain Challis / ATCC 35105 / BCRC 15272 / CH1 / DL1 / V288).